Consider the following 338-residue polypeptide: MIRVAINGYGRIGRSILRALYESGKRQQIQIVAINELAKPEAIIHLTQYDTTHGRFQHKVKLVDNHMLIGDDAIKILHEPDAAKLPWREMDIDIVYEATGVILDRQSCEAHIHAGAKQVLISHPSSADVDGTIVYGVNHDLLRAGHTVVSNASCTTNCIVPVIDVLDKHFGVKSGAITTIHSAMNDQQVIDAYHDDLRRTRAAGQSIIPVDTKLARGIERILPHMKDKFEAISVRVPTINVTAIDLSVTLAKTVDIASVNQVLELAANGRFNGILGYTDEPLVSCDFNHDPRSSIVDGTQTRVSAGQLVKLLLWCDNEWGFANRMLDTSLAMIAAKQS.

11 to 12 (RI) serves as a coordination point for NAD(+). Substrate-binding positions include 153-155 (SCT), Arg199, 212-213 (TK), and Arg235. The active-site Nucleophile is Cys154. Asn317 contributes to the NAD(+) binding site.

Belongs to the glyceraldehyde-3-phosphate dehydrogenase family. Epd subfamily. In terms of assembly, homotetramer.

The protein localises to the cytoplasm. It catalyses the reaction D-erythrose 4-phosphate + NAD(+) + H2O = 4-phospho-D-erythronate + NADH + 2 H(+). It functions in the pathway cofactor biosynthesis; pyridoxine 5'-phosphate biosynthesis; pyridoxine 5'-phosphate from D-erythrose 4-phosphate: step 1/5. Functionally, catalyzes the NAD-dependent conversion of D-erythrose 4-phosphate to 4-phosphoerythronate. The chain is D-erythrose-4-phosphate dehydrogenase from Shewanella putrefaciens (strain CN-32 / ATCC BAA-453).